A 671-amino-acid polypeptide reads, in one-letter code: cGMP-dependent protein kinase 1 (671 aa).

The residue at position 2 (serine 2) is an N-acetylserine. A coiled-coil region spans residues serine 2–threonine 59. A required for dimerization region spans residues serine 2–aspartate 102. Positions alanine 9 to glutamine 44 are leucine-zipper. Positions proline 50–histidine 75 are autoinhibitory domain. Residue threonine 59 is modified to Phosphothreonine; by autocatalysis. The cGMP-binding, high affinity stretch occupies residues phenylalanine 103–proline 220. 3',5'-cyclic AMP is bound by residues glycine 167–alanine 170 and arginine 177–threonine 178. 3',5'-cyclic GMP is bound by residues glycine 167–alanine 170, arginine 177–threonine 178, arginine 282, glycine 291–alanine 294, arginine 301–threonine 302, and tyrosine 336. The interval threonine 221–alanine 341 is cGMP-binding, low affinity. Residues glycine 291–alanine 294, arginine 301–threonine 302, and tyrosine 336 each bind 3',5'-cyclic AMP. A Protein kinase domain is found at phenylalanine 360–phenylalanine 619. Residues leucine 366 to valine 374 and lysine 390 contribute to the ATP site. The Proton acceptor role is filled by aspartate 484. Residue threonine 515 is modified to Phosphothreonine. Residues glutamate 620–phenylalanine 671 enclose the AGC-kinase C-terminal domain. The segment at proline 635–phenylalanine 671 is disordered. Positions phenylalanine 652–proline 661 are enriched in acidic residues.

It belongs to the protein kinase superfamily. AGC Ser/Thr protein kinase family. cGMP subfamily. Isoform alpha: parallel homodimer or heterodimer and also heterotetramer. Interacts directly with PPP1R12A. Non-covalent dimer of dimer of PRKG1-PRKG1 and PPP1R12A-PPP1R12A. This interaction targets PRKG1 to stress fibers to mediate smooth muscle cell relaxation and vasodilation in responses to rises in cGMP. Isoform beta: antiparallel homodimer. Part of cGMP kinase signaling complex at least composed of ACTA2/alpha-actin, CNN1/calponin H1, PLN/phospholamban, PRKG1 and ITPR1. Interacts with IRAG1. Forms a stable complex with ITPR1, IRAG1, and isoform beta of PRKG1. Interacts with TRPC7 (via ankyrin repeat domain). Isoform alpha interacts with RGS2. Interacts with GTF2I. Autophosphorylation increases kinase activity. In terms of processing, 65 kDa monomer is produced by proteolytic cleavage. In terms of tissue distribution, primarily expressed in lung and placenta.

The protein resides in the cytoplasm. It catalyses the reaction L-seryl-[protein] + ATP = O-phospho-L-seryl-[protein] + ADP + H(+). The enzyme catalyses L-threonyl-[protein] + ATP = O-phospho-L-threonyl-[protein] + ADP + H(+). With respect to regulation, in the absence of cGMP, PRKG1 activity is suppressed by autoinhibitory contacts. Functionally, serine/threonine protein kinase that acts as a key mediator of the nitric oxide (NO)/cGMP signaling pathway. GMP binding activates PRKG1, which phosphorylates serines and threonines on many cellular proteins. Numerous protein targets for PRKG1 phosphorylation are implicated in modulating cellular calcium, but the contribution of each of these targets may vary substantially among cell types. Proteins that are phosphorylated by PRKG1 regulate platelet activation and adhesion, smooth muscle contraction, cardiac function, gene expression, feedback of the NO-signaling pathway, and other processes involved in several aspects of the CNS like axon guidance, hippocampal and cerebellar learning, circadian rhythm and nociception. Smooth muscle relaxation is mediated through lowering of intracellular free calcium, by desensitization of contractile proteins to calcium, and by decrease in the contractile state of smooth muscle or in platelet activation. Regulates intracellular calcium levels via several pathways: phosphorylates IRAG1 and inhibits IP3-induced Ca(2+) release from intracellular stores, phosphorylation of KCNMA1 (BKCa) channels decreases intracellular Ca(2+) levels, which leads to increased opening of this channel. PRKG1 phosphorylates the canonical transient receptor potential channel (TRPC) family which inactivates the associated inward calcium current. Another mode of action of NO/cGMP/PKGI signaling involves PKGI-mediated inactivation of the Ras homolog gene family member A (RhoA). Phosphorylation of RHOA by PRKG1 blocks the action of this protein in myriad processes: regulation of RHOA translocation; decreasing contraction; controlling vesicle trafficking, reduction of myosin light chain phosphorylation resulting in vasorelaxation. Activation of PRKG1 by NO signaling also alters gene expression in a number of tissues. In smooth muscle cells, increased cGMP and PRKG1 activity influence expression of smooth muscle-specific contractile proteins, levels of proteins in the NO/cGMP signaling pathway, down-regulation of the matrix proteins osteopontin and thrombospondin-1 to limit smooth muscle cell migration and phenotype. Regulates vasodilator-stimulated phosphoprotein (VASP) functions in platelets and smooth muscle. In Homo sapiens (Human), this protein is cGMP-dependent protein kinase 1 (PRKG1).